The sequence spans 148 residues: Deoxyuridine 5'-triphosphate nucleotidohydrolase (148 aa).

Substrate contacts are provided by residues 67–69 (RSG), N80, 84–86 (LID), and M94.

The protein belongs to the dUTPase family. The cofactor is Mg(2+).

The catalysed reaction is dUTP + H2O = dUMP + diphosphate + H(+). It functions in the pathway pyrimidine metabolism; dUMP biosynthesis; dUMP from dCTP (dUTP route): step 2/2. Its function is as follows. This enzyme is involved in nucleotide metabolism: it produces dUMP, the immediate precursor of thymidine nucleotides and it decreases the intracellular concentration of dUTP so that uracil cannot be incorporated into DNA. This is Deoxyuridine 5'-triphosphate nucleotidohydrolase from Ralstonia nicotianae (strain ATCC BAA-1114 / GMI1000) (Ralstonia solanacearum).